The sequence spans 69 residues: U2-agatoxin-Ao1c (69 aa).

An N-terminal signal peptide occupies residues 1–20 (MKAIISLLLISAMVFSMIEA). Positions 21 to 34 (VPVEEGLQLFEGER) are excised as a propeptide. Intrachain disulfides connect Cys-36–Cys-52, Cys-43–Cys-57, and Cys-51–Cys-67. Leu-68 is subject to Leucine amide.

This sequence belongs to the neurotoxin 01 (U2-agtx) family. As to expression, expressed by the venom gland.

It localises to the secreted. Functionally, insect active toxin causing rapid but reversible paralysis in crickets. No activity shown in mammals. Does not show effect on mammalian voltage-gated calcium channels. The protein is U2-agatoxin-Ao1c of Agelena orientalis (Funnel-web spider).